The primary structure comprises 302 residues: 4-hydroxy-tetrahydrodipicolinate synthase (302 aa).

A pyruvate-binding site is contributed by Thr-50. Tyr-138 functions as the Proton donor/acceptor in the catalytic mechanism. Lys-167 functions as the Schiff-base intermediate with substrate in the catalytic mechanism. Val-209 serves as a coordination point for pyruvate.

This sequence belongs to the DapA family. Homotetramer; dimer of dimers.

Its subcellular location is the cytoplasm. It catalyses the reaction L-aspartate 4-semialdehyde + pyruvate = (2S,4S)-4-hydroxy-2,3,4,5-tetrahydrodipicolinate + H2O + H(+). Its pathway is amino-acid biosynthesis; L-lysine biosynthesis via DAP pathway; (S)-tetrahydrodipicolinate from L-aspartate: step 3/4. Catalyzes the condensation of (S)-aspartate-beta-semialdehyde [(S)-ASA] and pyruvate to 4-hydroxy-tetrahydrodipicolinate (HTPA). The protein is 4-hydroxy-tetrahydrodipicolinate synthase of Salinibacter ruber (strain DSM 13855 / M31).